Consider the following 416-residue polypeptide: Serine hydroxymethyltransferase (416 aa).

Residues leucine 121 and 125-127 each bind (6S)-5,6,7,8-tetrahydrofolate; that span reads GHL. At lysine 229 the chain carries N6-(pyridoxal phosphate)lysine.

The protein belongs to the SHMT family. As to quaternary structure, homodimer. Pyridoxal 5'-phosphate serves as cofactor.

It is found in the cytoplasm. It carries out the reaction (6R)-5,10-methylene-5,6,7,8-tetrahydrofolate + glycine + H2O = (6S)-5,6,7,8-tetrahydrofolate + L-serine. The protein operates within one-carbon metabolism; tetrahydrofolate interconversion. It functions in the pathway amino-acid biosynthesis; glycine biosynthesis; glycine from L-serine: step 1/1. In terms of biological role, catalyzes the reversible interconversion of serine and glycine with tetrahydrofolate (THF) serving as the one-carbon carrier. This reaction serves as the major source of one-carbon groups required for the biosynthesis of purines, thymidylate, methionine, and other important biomolecules. Also exhibits THF-independent aldolase activity toward beta-hydroxyamino acids, producing glycine and aldehydes, via a retro-aldol mechanism. The chain is Serine hydroxymethyltransferase from Neisseria meningitidis serogroup A / serotype 4A (strain DSM 15465 / Z2491).